Consider the following 614-residue polypeptide: Probable peptide-binding protein YejA (614 aa).

The first 27 residues, 1 to 27, serve as a signal peptide directing secretion; the sequence is MILAPLKSRILIALAASALLIPAVASA.

The protein belongs to the bacterial solute-binding protein 5 family. The complex is composed of one ATP-binding protein (YejF), two transmembrane proteins (YejB and YejE) and a solute-binding protein (YejA).

The protein resides in the periplasm. Functionally, probably part of the ABC transporter complex YejABEF, which is likely involved in broad-spectrum peptide import. This Agrobacterium fabrum (strain C58 / ATCC 33970) (Agrobacterium tumefaciens (strain C58)) protein is Probable peptide-binding protein YejA.